A 356-amino-acid polypeptide reads, in one-letter code: Phospho-N-acetylmuramoyl-pentapeptide-transferase (356 aa).

The next 10 helical transmembrane spans lie at 3 to 23, 51 to 71, 80 to 100, 114 to 134, 152 to 172, 185 to 205, 227 to 247, 254 to 274, 279 to 299, and 333 to 353; these read QILF…PLLI, TMGG…AKVI, GLLV…DDYI, AKMA…LQFP, FGWS…ILAM, LATG…LWQF, PLDL…FLWW, IFMG…LAIL, FLLA…VIQV, and FWII…AGWA.

This sequence belongs to the glycosyltransferase 4 family. MraY subfamily. The cofactor is Mg(2+).

Its subcellular location is the cell membrane. The enzyme catalyses UDP-N-acetyl-alpha-D-muramoyl-L-alanyl-gamma-D-glutamyl-meso-2,6-diaminopimeloyl-D-alanyl-D-alanine + di-trans,octa-cis-undecaprenyl phosphate = di-trans,octa-cis-undecaprenyl diphospho-N-acetyl-alpha-D-muramoyl-L-alanyl-D-glutamyl-meso-2,6-diaminopimeloyl-D-alanyl-D-alanine + UMP. The protein operates within cell wall biogenesis; peptidoglycan biosynthesis. Functionally, catalyzes the initial step of the lipid cycle reactions in the biosynthesis of the cell wall peptidoglycan: transfers peptidoglycan precursor phospho-MurNAc-pentapeptide from UDP-MurNAc-pentapeptide onto the lipid carrier undecaprenyl phosphate, yielding undecaprenyl-pyrophosphoryl-MurNAc-pentapeptide, known as lipid I. The sequence is that of Phospho-N-acetylmuramoyl-pentapeptide-transferase from Streptomyces griseus subsp. griseus (strain JCM 4626 / CBS 651.72 / NBRC 13350 / KCC S-0626 / ISP 5235).